The primary structure comprises 335 residues: F420-dependent glucose-6-phosphate dehydrogenase 1 (335 aa).

Residue Asp-38 participates in coenzyme F420-(gamma-Glu)n binding. The active-site Proton donor is the His-39. Residues Thr-75 and 106 to 107 (TG) contribute to the coenzyme F420-(gamma-Glu)n site. Glu-108 serves as the catalytic Proton acceptor. Coenzyme F420-(gamma-Glu)n contacts are provided by residues Asn-111, 176–177 (GG), and 179–180 (VV). Positions 194, 197, 258, and 282 each coordinate substrate.

It belongs to the F420-dependent glucose-6-phosphate dehydrogenase family. Homodimer.

It carries out the reaction oxidized coenzyme F420-(gamma-L-Glu)(n) + D-glucose 6-phosphate + H(+) = 6-phospho-D-glucono-1,5-lactone + reduced coenzyme F420-(gamma-L-Glu)(n). Its function is as follows. Catalyzes the coenzyme F420-dependent oxidation of glucose 6-phosphate (G6P) to 6-phosphogluconolactone. The protein is F420-dependent glucose-6-phosphate dehydrogenase 1 of Rhodococcus jostii (strain RHA1).